The chain runs to 417 residues: NADH-quinone oxidoreductase subunit D (417 aa).

This sequence belongs to the complex I 49 kDa subunit family. As to quaternary structure, NDH-1 is composed of 14 different subunits. Subunits NuoB, C, D, E, F, and G constitute the peripheral sector of the complex.

It is found in the cell inner membrane. The enzyme catalyses a quinone + NADH + 5 H(+)(in) = a quinol + NAD(+) + 4 H(+)(out). In terms of biological role, NDH-1 shuttles electrons from NADH, via FMN and iron-sulfur (Fe-S) centers, to quinones in the respiratory chain. The immediate electron acceptor for the enzyme in this species is believed to be ubiquinone. Couples the redox reaction to proton translocation (for every two electrons transferred, four hydrogen ions are translocated across the cytoplasmic membrane), and thus conserves the redox energy in a proton gradient. In Legionella pneumophila (strain Corby), this protein is NADH-quinone oxidoreductase subunit D.